The sequence spans 416 residues: UDP-N-acetylglucosamine 1-carboxyvinyltransferase (416 aa).

Position 22 to 23 (22 to 23 (KN)) interacts with phosphoenolpyruvate. Residue arginine 92 participates in UDP-N-acetyl-alpha-D-glucosamine binding. Cysteine 116 functions as the Proton donor in the catalytic mechanism. A 2-(S-cysteinyl)pyruvic acid O-phosphothioketal modification is found at cysteine 116. UDP-N-acetyl-alpha-D-glucosamine is bound by residues 121–125 (RPVDQ), aspartate 304, and isoleucine 326.

The protein belongs to the EPSP synthase family. MurA subfamily.

It localises to the cytoplasm. The catalysed reaction is phosphoenolpyruvate + UDP-N-acetyl-alpha-D-glucosamine = UDP-N-acetyl-3-O-(1-carboxyvinyl)-alpha-D-glucosamine + phosphate. The protein operates within cell wall biogenesis; peptidoglycan biosynthesis. Functionally, cell wall formation. Adds enolpyruvyl to UDP-N-acetylglucosamine. This is UDP-N-acetylglucosamine 1-carboxyvinyltransferase from Cupriavidus pinatubonensis (strain JMP 134 / LMG 1197) (Cupriavidus necator (strain JMP 134)).